Reading from the N-terminus, the 410-residue chain is Cysteine desulfurase (410 aa).

The residue at position 227 (Lys-227) is an N6-(pyridoxal phosphate)lysine. The Cysteine persulfide intermediate role is filled by Cys-365.

This sequence belongs to the class-V pyridoxal-phosphate-dependent aminotransferase family. Csd subfamily. In terms of assembly, homodimer. Interacts with SufE and the SufBCD complex composed of SufB, SufC and SufD. The interaction with SufE is required to mediate the direct transfer of the sulfur atom from the S-sulfanylcysteine. Pyridoxal 5'-phosphate is required as a cofactor.

Its subcellular location is the cytoplasm. The enzyme catalyses (sulfur carrier)-H + L-cysteine = (sulfur carrier)-SH + L-alanine. It catalyses the reaction L-selenocysteine + AH2 = hydrogenselenide + L-alanine + A + H(+). Its pathway is cofactor biosynthesis; iron-sulfur cluster biosynthesis. In terms of biological role, cysteine desulfurases mobilize the sulfur from L-cysteine to yield L-alanine, an essential step in sulfur metabolism for biosynthesis of a variety of sulfur-containing biomolecules. Component of the suf operon, which is activated and required under specific conditions such as oxidative stress and iron limitation. Acts as a potent selenocysteine lyase in vitro, that mobilizes selenium from L-selenocysteine. Selenocysteine lyase activity is however unsure in vivo. The polypeptide is Cysteine desulfurase (Wigglesworthia glossinidia brevipalpis).